Reading from the N-terminus, the 369-residue chain is tRNA pseudouridine synthase D (369 aa).

The active-site Nucleophile is the aspartate 80. Residues 156–318 (GIPNWFGEQR…LKQERRALRL (163 aa)) enclose the TRUD domain.

This sequence belongs to the pseudouridine synthase TruD family.

The enzyme catalyses uridine(13) in tRNA = pseudouridine(13) in tRNA. In terms of biological role, responsible for synthesis of pseudouridine from uracil-13 in transfer RNAs. The chain is tRNA pseudouridine synthase D from Xanthomonas oryzae pv. oryzae (strain KACC10331 / KXO85).